Consider the following 374-residue polypeptide: Anhydro-N-acetylmuramic acid kinase (374 aa).

ATP is bound at residue 9–16; that stretch reads GTSLDGID.

Belongs to the anhydro-N-acetylmuramic acid kinase family.

The catalysed reaction is 1,6-anhydro-N-acetyl-beta-muramate + ATP + H2O = N-acetyl-D-muramate 6-phosphate + ADP + H(+). Its pathway is amino-sugar metabolism; 1,6-anhydro-N-acetylmuramate degradation. It functions in the pathway cell wall biogenesis; peptidoglycan recycling. In terms of biological role, catalyzes the specific phosphorylation of 1,6-anhydro-N-acetylmuramic acid (anhMurNAc) with the simultaneous cleavage of the 1,6-anhydro ring, generating MurNAc-6-P. Is required for the utilization of anhMurNAc either imported from the medium or derived from its own cell wall murein, and thus plays a role in cell wall recycling. The sequence is that of Anhydro-N-acetylmuramic acid kinase from Methylobacterium nodulans (strain LMG 21967 / CNCM I-2342 / ORS 2060).